The primary structure comprises 407 residues: MEAPPGPEPMELDAPPPPAAVAAAAATAGISEKVLQKKEEGGGDAVTGHIISTTIGGKNGEPKRTISYMAERVVGTGSFGIVFQAKCLETGETVAIKKVLQDRRYKNRELQLMRAMEHPNVICLKHCFFSTTSRDELFLNLVMEYVPETLYRVLKHYSNANQRMPLIYVKLYIYQLFRGLAYIHTVPGVCHRDVKPQNVLVDPLTHQVKLCDFGSAKVLVPGEPNISYICSRYYRAPELIFGATEYTTSIDIWSAGCVLAELLLGQPLFPGESAVDQLVEIIKVLGTPTREEIRCMNPNYTEFKFPQIKAHPWHKIFHKRMPPEAIDLASRLLQYSPSLRCTALDACAHSFFDELREPNARLPNGRPFPPLFNFKHELASASPELIHRLIPDHIRRQHGLNFAHAGS.

The span at 1 to 19 (MEAPPGPEPMELDAPPPPA) shows a compositional bias: pro residues. Positions 1–21 (MEAPPGPEPMELDAPPPPAAV) are disordered. Positions 68–352 (YMAERVVGTG…ALDACAHSFF (285 aa)) constitute a Protein kinase domain. ATP-binding positions include 74-82 (VGTGSFGIV) and Lys-97. The active-site Proton acceptor is the Asp-193.

This sequence belongs to the protein kinase superfamily. CMGC Ser/Thr protein kinase family. GSK-3 subfamily. In terms of assembly, interacts with LIC. As to expression, highly expressed in the entire young panicles, spikelets, awns, vascular bundles of palea and lemma, stigma and rachilla. Expressed in root tips, root hairs, lamina joint in the collar region, vascular bundles of coleoptiles.

It carries out the reaction L-seryl-[protein] + ATP = O-phospho-L-seryl-[protein] + ADP + H(+). The catalysed reaction is L-threonyl-[protein] + ATP = O-phospho-L-threonyl-[protein] + ADP + H(+). Functionally, probable serine-threonine kinase that may act as a negative regulator of brassinosteroid (BR) signaling during flower development. May have physiological roles in stress signal-transduction pathways. Phosphorylates LIC in response to BR perception. This chain is Shaggy-related protein kinase GSK1, found in Oryza sativa subsp. japonica (Rice).